Here is a 154-residue protein sequence, read N- to C-terminus: MTKRGIQAFAGGIILATAVLAAVFYLTDEDQAAAVKDNKTVTEQDVNNYLDSKKLVSVNRDEYQKLLDSKEKSLNNDSGSDTKSDKVKTYKLTIKDGMSTADVSAILEKEGIISSAQDFNDYVIDAGYHKEIRAGEFKVKSDMSFKKIVKTLTR.

The signal sequence occupies residues 1–33; the sequence is MTKRGIQAFAGGIILATAVLAAVFYLTDEDQAA.

This is an uncharacterized protein from Bacillus subtilis (strain 168).